The following is a 429-amino-acid chain: Isocitrate dehydrogenase [NADP] (429 aa).

NADP(+) is bound at residue Thr-108. D-threo-isocitrate-binding residues include Ser-117, Asn-119, Arg-123, Arg-133, and Arg-156. Residue Asp-308 coordinates Mg(2+). NADP(+) is bound by residues 340 to 346 (HGSAPKY), Asn-353, Tyr-393, and Arg-397.

The protein belongs to the isocitrate and isopropylmalate dehydrogenases family. As to quaternary structure, homodimer. It depends on Mg(2+) as a cofactor. Mn(2+) is required as a cofactor.

It catalyses the reaction D-threo-isocitrate + NADP(+) = 2-oxoglutarate + CO2 + NADPH. Functionally, catalyzes the oxidative decarboxylation of isocitrate to 2-oxoglutarate and carbon dioxide with the concomitant reduction of NADP(+). In Caldococcus noboribetus, this protein is Isocitrate dehydrogenase [NADP] (icd).